A 254-amino-acid chain; its full sequence is L-arabinose 1-dehydrogenase (NAD(P)(+)) (254 aa).

Catalysis depends on Tyr-142, which acts as the Proton acceptor. Residues Tyr-142 and Lys-146 each contribute to the NAD(+) site.

The protein belongs to the NAD(P)-dependent epimerase/dehydratase family. As to quaternary structure, homotetramer.

It carries out the reaction alpha-L-arabinopyanose + NAD(+) = L-arabinono-1,4-lactone + NADH + H(+). It catalyses the reaction alpha-L-arabinopyanose + NADP(+) = L-arabinono-1,4-lactone + NADPH + H(+). It participates in carbohydrate degradation; L-arabinose degradation via L-arabinono-1,4-lactone pathway. Functionally, L-AraDH initiates the degradation of L-arabinose. Catalyzes the NAD(P)(+)-dependent conversion of L-arabinose to L-arabino-gamma-lactone. It is highly specific for L-arabinose as substrate and can use both NADP(+) and NAD(+) as electron acceptor, with a slight preference for NADP(+). The polypeptide is L-arabinose 1-dehydrogenase (NAD(P)(+)) (Haloferax volcanii (strain ATCC 29605 / DSM 3757 / JCM 8879 / NBRC 14742 / NCIMB 2012 / VKM B-1768 / DS2) (Halobacterium volcanii)).